Reading from the N-terminus, the 579-residue chain is UPF0324 membrane protein DVU_2133 (579 aa).

The next 11 helical transmembrane spans lie at 26 to 45 (YWAIWLGFVILIAGMWLFLA), 193 to 215 (PFNIATSLPMLMVALGLFFAVGM), 225 to 243 (FLVGFIGVFFVAVLALMMG), 250 to 272 (YWGIGAEAWAIIIGMLVANTVGT), 305 to 327 (IGIPGIFVAWVVTPIVLICTFIF), 369 to 391 (LTLAIGLSLVFTAIMMIAMPAFI), 401 to 423 (GGAWMGGTIDATGAVAAAGAFLG), 436 to 456 (IQNVLIGVVAFGVAVYWCARV), 476 to 495 (FVLGFLAASVLFSVISGSLG), 515 to 534 (LRNWFFCLAFTSIGLATNFR), and 549 to 571 (YVAGQSFNLVLTLAMAYVMFYIV).

The protein belongs to the UPF0324 family.

The protein resides in the cell membrane. The sequence is that of UPF0324 membrane protein DVU_2133 from Nitratidesulfovibrio vulgaris (strain ATCC 29579 / DSM 644 / CCUG 34227 / NCIMB 8303 / VKM B-1760 / Hildenborough) (Desulfovibrio vulgaris).